Consider the following 207-residue polypeptide: Protein Nef (207 aa).

Glycine 2 carries the N-myristoyl glycine; by host lipid modification. Phosphoserine; by host is present on serine 6. An acidic; interacts with host PACS1 and PACS2; stabilizes the interaction of NEF/MHC-I with host AP1M1; necessary for MHC-I internalization region spans residues 62–66 (EESEE). Residues 70 to 79 (PVRPQVPLRP) are SH3-binding; interaction with Src family tyrosine kinases. The PxxP; stabilizes the interaction of NEF/MHC-I with host AP1M1; necessary for MHC-I internalization signature appears at 73–76 (PQVP). Residues 109–125 (EILDLWVYNTQGIFPDW) form a mediates dimerization, Nef-PTE1 interaction region. Positions 149-181 (VDPQEVEEATEREDNCLLHPMCQQGMEDPERQV) are binding to ATP6V1H. Residues 165 to 166 (LL) carry the Dileucine internalization motif; necessary for CD4 internalization motif. The Diacidic; necessary for CD4 internalization motif lies at 175 to 176 (ED).

Belongs to the lentivirus primate group Nef protein family. As to quaternary structure, monomer; cytosolic form. Homodimer; membrane bound form. Interacts with Nef associated p21-activated kinase (PAK2); this interaction activates PAK2. Associates with the Nef-MHC-I-AP1 complex; this complex is required for MHC-I internalization. Interacts (via C-terminus) with host PI3-kinase. Interacts with host PACS1; this interaction seems to be weak. Interacts with host PACS2. Interacts with host LCK and MAPK3; these interactions inhibit the kinase activity of the latter. Interacts with host ATP6V1H; this interaction may play a role in CD4 endocytosis. Associates with the CD4-Nef-AP2 complex; this complex is required for CD4 internalization. Interacts with host AP2 subunit alpha and AP2 subunit sigma2. Interacts with TCR-zeta chain; this interaction up-regulates the Fas ligand (FasL) surface expression. Interacts with host HCK, LYN, and SRC; these interactions activate the Src family kinases. Interacts with MAP3K5; this interaction inhibits the Fas and TNFR-mediated death signals. Interacts with beta-COP and PTE1. Interacts with human RACK1; this increases Nef phosphorylation by PKC. Interacts with TP53; this interaction decreases the half-life of TP53, protecting the infected cell against p53-mediated apoptosis. In terms of processing, the virion-associated Nef proteins are cleaved by the viral protease to release the soluble C-terminal core protein. Nef is probably cleaved concomitantly with viral structural proteins on maturation of virus particles. Post-translationally, myristoylated. Phosphorylated on serine residues, probably by host PKCdelta and theta.

Its subcellular location is the host cell membrane. The protein localises to the virion. It localises to the secreted. It is found in the host Golgi apparatus membrane. Its function is as follows. Factor of infectivity and pathogenicity, required for optimal virus replication. Alters numerous pathways of T-lymphocyte function and down-regulates immunity surface molecules in order to evade host defense and increase viral infectivity. Alters the functionality of other immunity cells, like dendritic cells, monocytes/macrophages and NK cells. In terms of biological role, in infected CD4(+) T-lymphocytes, down-regulates the surface MHC-I, mature MHC-II, CD4, CD28, CCR5 and CXCR4 molecules. Mediates internalization and degradation of host CD4 through the interaction of with the cytoplasmic tail of CD4, the recruitment of AP-2 (clathrin adapter protein complex 2), internalization through clathrin coated pits, and subsequent transport to endosomes and lysosomes for degradation. Diverts host MHC-I molecules to the trans-Golgi network-associated endosomal compartments by an endocytic pathway to finally target them for degradation. MHC-I down-regulation may involve AP-1 (clathrin adapter protein complex 1) or possibly Src family kinase-ZAP70/Syk-PI3K cascade recruited by PACS2. In consequence infected cells are masked for immune recognition by cytotoxic T-lymphocytes. Decreasing the number of immune receptors also prevents reinfection by more HIV particles (superinfection). Down-regulates host SERINC3 and SERINC5 thereby excluding these proteins from the viral particles. Virion infectivity is drastically higher when SERINC3 or SERINC5 are excluded from the viral envelope, because these host antiviral proteins impair the membrane fusion event necessary for subsequent virion penetration. Functionally, bypasses host T-cell signaling by inducing a transcriptional program nearly identical to that of anti-CD3 cell activation. Interaction with TCR-zeta chain up-regulates the Fas ligand (FasL). Increasing surface FasL molecules and decreasing surface MHC-I molecules on infected CD4(+) cells send attacking cytotoxic CD8+ T-lymphocytes into apoptosis. Plays a role in optimizing the host cell environment for viral replication without causing cell death by apoptosis. Protects the infected cells from apoptosis in order to keep them alive until the next virus generation is ready to strike. Inhibits the Fas and TNFR-mediated death signals by blocking MAP3K5/ASK1. Decreases the half-life of TP53, protecting the infected cell against p53-mediated apoptosis. Inhibits the apoptotic signals regulated by the Bcl-2 family proteins through the formation of a Nef/PI3-kinase/PAK2 complex that leads to activation of PAK2 and induces phosphorylation of host BAD. Its function is as follows. Extracellular Nef protein targets CD4(+) T-lymphocytes for apoptosis by interacting with CXCR4 surface receptors. The sequence is that of Protein Nef from Human immunodeficiency virus type 1 group M subtype D (isolate NDK) (HIV-1).